The following is a 25-amino-acid chain: LDVKKIICVACKIKPNPACKKICPK.

2 disulfide bridges follow: C8/C23 and C11/C19.

It is found in the target cell membrane. The protein localises to the secreted. Its function is as follows. Antimicrobial peptide active against Gram-positive bacteria M.luteus (MIC=1.6 uM) and B.subtilis (MIC=3.3 uM). Less active against Gram-negative bacteria E.coli (MIC=63.3 uM) and yeast C.albicans (MIC=24.2 uM). Not active against S.aureus and P.aeruginosa. Has no hemolytic activity against human erythrocytes. Probably acts by disrupting membranes of target cells. The sequence is that of Panurgine K from Panurgus calcaratus (Solitary bee).